The primary structure comprises 67 residues: MSFLKKSLFLVLFLGFVSLSICEEEKRETEEKENEQEDDREERSEEKRLLGMIPVAISAISALSKLG.

The signal sequence occupies residues 1–22; that stretch reads MSFLKKSLFLVLFLGFVSLSIC. Positions 23–48 are excised as a propeptide; that stretch reads EEEKRETEEKENEQEDDREERSEEKR. The interval 26–47 is disordered; the sequence is KRETEEKENEQEDDREERSEEK. The segment covering 31-40 has biased composition (acidic residues); it reads EKENEQEDDR. Leucine amide is present on Leu-66.

It belongs to the frog skin active peptide (FSAP) family. Medusin subfamily. Expressed by the skin glands.

Its subcellular location is the secreted. The protein localises to the target cell membrane. Functionally, antibacterial peptide with moderate activity against the Gram-positive bacteria (S.aureus ATCC 25923, MIC=25 uM), but not against all other bacteria (both Gram-positive and Gram-negative) tested. Does not show activity against fungi, and against Leishmania species. It adopts an alpha-helical structure with very low amphipathicity in membrane environments. This is Medusin-S1 from Phyllomedusa sauvagei (Sauvage's leaf frog).